A 424-amino-acid chain; its full sequence is Glutamyl-tRNA reductase (424 aa).

Substrate-binding positions include 49 to 52, serine 107, 112 to 114, and glutamine 118; these read TCNR and EPQ. Cysteine 50 acts as the Nucleophile in catalysis. Position 187 to 192 (187 to 192) interacts with NADP(+); sequence GAGETI.

This sequence belongs to the glutamyl-tRNA reductase family. In terms of assembly, homodimer.

It catalyses the reaction (S)-4-amino-5-oxopentanoate + tRNA(Glu) + NADP(+) = L-glutamyl-tRNA(Glu) + NADPH + H(+). It functions in the pathway porphyrin-containing compound metabolism; protoporphyrin-IX biosynthesis; 5-aminolevulinate from L-glutamyl-tRNA(Glu): step 1/2. Functionally, catalyzes the NADPH-dependent reduction of glutamyl-tRNA(Glu) to glutamate 1-semialdehyde (GSA). The chain is Glutamyl-tRNA reductase from Chromohalobacter salexigens (strain ATCC BAA-138 / DSM 3043 / CIP 106854 / NCIMB 13768 / 1H11).